The primary structure comprises 539 residues: MPIEIVCKIKFAEEDAKPKEKEAGDEQSLLGAAQGPAAPRDLATFASTSTLHGLGRACGPGPHGLRRTLWVLALLTSLAAFLYQAASLARGYLTRPHLVAMDPAAPAPVAGFPAVTLCNINRFRHSALSDADIFHLANLTGLPPKDRDGHRAAGLRYPEPDMVDILNRTGHQLADMLKSCNFSGHHCSASNFSVVYTRYGKCYTFNADPQSSLPSRAGGMGSGLEIMLDIQQEEYLPIWRETNETSFEAGIRVQIHSQEEPPYIHQLGFGVSPGFQTFVSCQKQRLTYLPQPWGNCRAESKLREPELQGYSAYSVSACRLRCEKEAVLQRCHCRMVHMPGNETICPPNIYIECADHTLDSLGGGSEGPCFCPTPCNLTRYGKEISMVKIPNRGSARYLARKYNRNETYIRENFLVLDVFFEALTSEAMEQRAAYGLSALLGDLGGQMGLFIGASILTLLEILDYIYEVSWDRLKRVWRRPKTPLRTSTGGISTLGLQELKEQSPCPNRGRAEGGGASNLLPNHHHPHGPPGSLFEDFAC.

Residues 1–68 (MPIEIVCKIK…GPGPHGLRRT (68 aa)) lie on the Cytoplasmic side of the membrane. The chain crosses the membrane as a helical span at residues 69–89 (LWVLALLTSLAAFLYQAASLA). Topologically, residues 90-438 (RGYLTRPHLV…EQRAAYGLSA (349 aa)) are extracellular. 2 disulfide bridges follow: cysteine 118/cysteine 202 and cysteine 180/cysteine 187. 4 N-linked (GlcNAc...) asparagine glycosylation sites follow: asparagine 191, asparagine 243, asparagine 341, and asparagine 376. 5 disulfide bridges follow: cysteine 296–cysteine 375, cysteine 318–cysteine 371, cysteine 322–cysteine 369, cysteine 331–cysteine 353, and cysteine 333–cysteine 345. The helical transmembrane segment at 439–459 (LLGDLGGQMGLFIGASILTLL) threads the bilayer. The GAS motif; ion selectivity filter motif lies at 452 to 454 (GAS). At 460–539 (EILDYIYEVS…PGSLFEDFAC (80 aa)) the chain is on the cytoplasmic side. Residues 501–531 (EQSPCPNRGRAEGGGASNLLPNHHHPHGPPG) form a disordered region.

It belongs to the amiloride-sensitive sodium channel (TC 1.A.6) family. ASIC4 subfamily. As to quaternary structure, homotrimer. Heterotrimer; with other ASIC proteins producing functional channels. As to expression, expressed in brain, spinal cord and dorsal root ganglion (DRG). Expressed by a subset of sensory neurons in the DRG. Expressed by granule cells in the cerebellar cortex. In hippocampus, expression is detected in dentate gyrus granule cells, in pyramidal cells of CA1-CA3 subfields and in interneurons of the striatum oriens and radiatum of all subfields. In cerebral cortex expressed in small, medium and large pyramidal cells in layers 2, 3 and 5 respectively. Also expressed in striatum, globus pallidus, inferior and superior calliculi, amygdala, magnocellular preoptic nucleus, islands of Calleja and large neurons of olfactory tubercules.

The protein resides in the cell membrane. In terms of biological role, does not exhibit measurable stand-alone pH-gated sodium channel activity but may form pH-gated heterotrimeric sodium channels. Its activity could also depend on alternative gating mechanisms. In Rattus norvegicus (Rat), this protein is Acid-sensing ion channel 4.